Here is a 132-residue protein sequence, read N- to C-terminus: Translation initiation factor 5A (132 aa).

Lys36 bears the Hypusine mark.

It belongs to the eIF-5A family.

It localises to the cytoplasm. Functionally, functions by promoting the formation of the first peptide bond. In Pyrobaculum arsenaticum (strain DSM 13514 / JCM 11321 / PZ6), this protein is Translation initiation factor 5A (eIF5A).